The following is a 389-amino-acid chain: Succinate--CoA ligase [ADP-forming] subunit beta (389 aa).

An ATP-grasp domain is found at 9–244 (KQLLAEYGIP…KTQEDETEVT (236 aa)). ATP is bound by residues lysine 46, 53 to 55 (GRG), glycine 102, and glutamate 107. The Mg(2+) site is built by asparagine 199 and aspartate 213. Substrate is bound by residues asparagine 264 and 321 to 323 (GIV).

Belongs to the succinate/malate CoA ligase beta subunit family. Heterotetramer of two alpha and two beta subunits. Requires Mg(2+) as cofactor.

It carries out the reaction succinate + ATP + CoA = succinyl-CoA + ADP + phosphate. The catalysed reaction is GTP + succinate + CoA = succinyl-CoA + GDP + phosphate. The protein operates within carbohydrate metabolism; tricarboxylic acid cycle; succinate from succinyl-CoA (ligase route): step 1/1. Succinyl-CoA synthetase functions in the citric acid cycle (TCA), coupling the hydrolysis of succinyl-CoA to the synthesis of either ATP or GTP and thus represents the only step of substrate-level phosphorylation in the TCA. The beta subunit provides nucleotide specificity of the enzyme and binds the substrate succinate, while the binding sites for coenzyme A and phosphate are found in the alpha subunit. This Xanthomonas euvesicatoria pv. vesicatoria (strain 85-10) (Xanthomonas campestris pv. vesicatoria) protein is Succinate--CoA ligase [ADP-forming] subunit beta.